The following is a 362-amino-acid chain: sn-glycerol-3-phosphate import ATP-binding protein UgpC (362 aa).

The ABC transporter domain occupies 4 to 235; the sequence is LSFRNVKKTY…PASTFVAGFI (232 aa). Residue 37 to 44 coordinates ATP; the sequence is GPSGCGKS.

The protein belongs to the ABC transporter superfamily. sn-glycerol-3-phosphate importer (TC 3.A.1.1.3) family. In terms of assembly, the complex is composed of two ATP-binding proteins (UgpC), two transmembrane proteins (UgpA and UgpE) and a solute-binding protein (UgpB).

The protein resides in the cell inner membrane. The catalysed reaction is sn-glycerol 3-phosphate(out) + ATP + H2O = sn-glycerol 3-phosphate(in) + ADP + phosphate + H(+). Functionally, part of the ABC transporter complex UgpBAEC involved in sn-glycerol-3-phosphate (G3P) import. Responsible for energy coupling to the transport system. In Bordetella pertussis (strain Tohama I / ATCC BAA-589 / NCTC 13251), this protein is sn-glycerol-3-phosphate import ATP-binding protein UgpC.